A 352-amino-acid polypeptide reads, in one-letter code: Alpha-2-HS-glycoprotein (352 aa).

Positions 1–18 (MKSLVLLLCFAQLWSCQS) are cleaved as a signal peptide. Residues 19-133 (APQGAGLGFR…QFRVLHAQCH (115 aa)) form the Cystatin fetuin-A-type 1 domain. Cystine bridges form between cysteine 32–cysteine 343, cysteine 89–cysteine 100, cysteine 114–cysteine 132, cysteine 146–cysteine 149, cysteine 208–cysteine 219, and cysteine 230–cysteine 247. N-linked (GlcNAc...) asparagine glycosylation occurs at asparagine 99. A Phosphoserine modification is found at serine 134. At threonine 135 the chain carries Phosphothreonine. Serine 138 bears the Phosphoserine mark. Residues 144 to 250 (KFCPRCPILI…EEVSVACKLF (107 aa)) enclose the Cystatin fetuin-A-type 2 domain. N-linked (GlcNAc...) asparagine glycans are attached at residues asparagine 156 and asparagine 176. The segment covering 256 to 273 (PANANPAGPAPTVGQAAP) has biased composition (low complexity). A disordered region spans residues 256–280 (PANANPAGPAPTVGQAAPVAPPAGP). Phosphoserine is present on residues serine 309, serine 313, serine 316, and serine 318. The tract at residues 319–338 (GEVLHSPKVGQPGDAGAAGP) is disordered. The span at 328-338 (GQPGDAGAAGP) shows a compositional bias: low complexity.

It belongs to the fetuin family. Undergoes complex post-translational modification involving N-glycosylation, and addition of fucose and sialic acid residues. Phosphorylation occurs at a serine residue. In terms of processing, phosphorylated by FAM20C in the extracellular medium. As to expression, synthesized in liver and secreted by the hepatocytes in the blood.

It localises to the secreted. Could inhibit both insulin-receptor tyrosine kinase activity and insulin-stimulated receptor autophosphorylation and, concomitantly, antagonize the mitogenic effect of the hormone in cultured rat hepatoma cells. In Rattus norvegicus (Rat), this protein is Alpha-2-HS-glycoprotein (Ahsg).